The chain runs to 267 residues: Undecaprenyl-diphosphatase (267 aa).

8 helical membrane passes run 1–21, 39–59, 87–107, 113–133, 144–164, 189–209, 219–239, and 244–264; these read MSEL…FLPI, QGLA…LIYF, WWIL…KSLV, SGYV…WADA, TGLK…IPGT, FLMS…KFIL, LFLG…VFLI, and VGMM…FYIL.

The protein belongs to the UppP family.

The protein resides in the cell inner membrane. It catalyses the reaction di-trans,octa-cis-undecaprenyl diphosphate + H2O = di-trans,octa-cis-undecaprenyl phosphate + phosphate + H(+). In terms of biological role, catalyzes the dephosphorylation of undecaprenyl diphosphate (UPP). Confers resistance to bacitracin. The chain is Undecaprenyl-diphosphatase from Psychromonas ingrahamii (strain DSM 17664 / CCUG 51855 / 37).